Reading from the N-terminus, the 561-residue chain is Urocanate hydratase (561 aa).

Residues 52-53 (GG), Gln130, 176-178 (GMG), Glu196, Arg201, 242-243 (NA), 263-267 (QTSAH), 273-274 (YL), and Tyr322 contribute to the NAD(+) site. Cys410 is a catalytic residue. Gly492 is a binding site for NAD(+).

It belongs to the urocanase family. It depends on NAD(+) as a cofactor.

It localises to the cytoplasm. The enzyme catalyses 4-imidazolone-5-propanoate = trans-urocanate + H2O. It functions in the pathway amino-acid degradation; L-histidine degradation into L-glutamate; N-formimidoyl-L-glutamate from L-histidine: step 2/3. Functionally, catalyzes the conversion of urocanate to 4-imidazolone-5-propionate. The chain is Urocanate hydratase from Enterobacter sp. (strain 638).